The primary structure comprises 64 residues: NSGNPCCDPVTCKPRRGEHCVSGPCCRNCKFLNAGTICKYARGDDMNDYCTGISSDCPRNPYKD.

One can recognise a Disintegrin domain in the interval 1 to 64 (NSGNPCCDPV…SDCPRNPYKD (64 aa)). Disulfide bonds link Cys6–Cys29, Cys20–Cys26, Cys25–Cys50, and Cys38–Cys57. The Cell attachment site motif lies at 42-44 (RGD).

Belongs to the disintegrin family. Dimeric disintegrin subfamily. As to quaternary structure, heterodimer with VB7B; disulfide-linked. As to expression, expressed by the venom gland.

The protein localises to the secreted. Poor inhibitor of platelet aggregation. The disintegrin inhibits the adhesion of cells expressing the RGD-dependent integrin alpha-5/beta-1 (ITGA5/ITGB1) to immobilized fibronectin. Inhibition on alpha-2b/beta-3 (ITGA2B/ITGB3) is low. The polypeptide is Disintegrin VB7A (Vipera berus berus (Common viper)).